A 102-amino-acid chain; its full sequence is Small ribosomal subunit protein uS10 (102 aa).

This sequence belongs to the universal ribosomal protein uS10 family. As to quaternary structure, part of the 30S ribosomal subunit.

Functionally, involved in the binding of tRNA to the ribosomes. In Methanoregula boonei (strain DSM 21154 / JCM 14090 / 6A8), this protein is Small ribosomal subunit protein uS10.